We begin with the raw amino-acid sequence, 108 residues long: UPF0060 membrane protein Nwi_1459 (108 aa).

Helical transmembrane passes span 5–25 (AAYV…WAWL), 31–51 (VWWL…LTLV), 61–81 (AAYG…VEGI), and 88–108 (LAGA…PHEI).

This sequence belongs to the UPF0060 family.

It localises to the cell inner membrane. The protein is UPF0060 membrane protein Nwi_1459 of Nitrobacter winogradskyi (strain ATCC 25391 / DSM 10237 / CIP 104748 / NCIMB 11846 / Nb-255).